The sequence spans 478 residues: UDP-glycosyltransferase 90A1 (478 aa).

UDP-alpha-D-glucose-binding positions include T289, 343–345 (VDQ), 360–368 (HCGWNSAQE), and 382–385 (MAEQ).

Belongs to the UDP-glycosyltransferase family.

The protein is UDP-glycosyltransferase 90A1 (UGT90A1) of Arabidopsis thaliana (Mouse-ear cress).